The chain runs to 245 residues: Probable phosphatase YcdX (245 aa).

Residues H7, H9, H15, H40, E73, H101, H131, D192, and H194 each contribute to the Zn(2+) site.

The protein belongs to the PHP family. As to quaternary structure, homotrimer. Zn(2+) is required as a cofactor.

The polypeptide is Probable phosphatase YcdX (Salmonella agona (strain SL483)).